An 881-amino-acid polypeptide reads, in one-letter code: Putative SWI/SNF-related matrix-associated actin-dependent regulator of chromatin subfamily A member 3-like 1 (881 aa).

The region spanning 272 to 486 (DKRPDPLRGG…YSLMAFLRFE (215 aa)) is the Helicase ATP-binding domain. 285–292 (DDMGLGKT) is an ATP binding site. Positions 308 to 343 (STSTPTEEPLDGEGDKIEKKGKKRGRGKSSESVTRK) are disordered. Positions 437-440 (DEAH) match the DEAH box motif. The RING-type zinc-finger motif lies at 635-674 (CPICISPPTNIIITRCAHIFCRACILQTLQRSKPLCPLCR). Residues 681 to 703 (DLYNAPPPPPDSSNTDGEDAKSS) form a disordered region. The Helicase C-terminal domain maps to 711–876 (ALLSLLMASR…EREVNVEDVV (166 aa)).

Belongs to the SNF2/RAD54 helicase family. RAD16 subfamily.

The protein resides in the nucleus. Its function is as follows. Possesses intrinsic ATP-dependent nucleosome-remodeling activity. This activity may be required for transcriptional activation or repression of specific target promoters. This is Putative SWI/SNF-related matrix-associated actin-dependent regulator of chromatin subfamily A member 3-like 1 from Arabidopsis thaliana (Mouse-ear cress).